Consider the following 343-residue polypeptide: Ubiquitin thioesterase OTU1 (343 aa).

Positions 45-123 (RCKAKGGTHL…IVEEDQTRPK (79 aa)) are UBX-like. Residues 144 to 269 (LTRTAVPADN…GIHYDPLQRN (126 aa)) enclose the OTU domain. Positions 149-155 (VPADNSC) are cys-loop. Residue D152 is part of the active site. C155 acts as the Nucleophile in catalysis. The tract at residues 208–218 (IRRDDTWGGAI) is variable-loop. Positions 258–262 (YDGIH) are his-loop. I261 contributes to the substrate binding site. H262 is an active-site residue. The tract at residues 286-291 (DIVLVQ) is S2 site. The C2H2-type zinc-finger motif lies at 313–337 (LRCMICQKGLTGQAEARDHARETGH). Residue H337 is part of the active site.

As to quaternary structure, interacts with VCP; the interaction is direct. Interacts with FAF2/UBXD8. Interacts with DERL1; however interaction is dependent on the UBAX-like region, suggesting that it may be indirect. Interacts with PLAA, UBXN6 and VCP; may form a complex involved in macroautophagy.

Its subcellular location is the cytoplasm. The enzyme catalyses Thiol-dependent hydrolysis of ester, thioester, amide, peptide and isopeptide bonds formed by the C-terminal Gly of ubiquitin (a 76-residue protein attached to proteins as an intracellular targeting signal).. Functionally, hydrolase that can remove conjugated ubiquitin from proteins and participates in endoplasmic reticulum-associated degradation (ERAD) for misfolded lumenal proteins. May act by triming the ubiquitin chain on the associated substrate to facilitate their threading through the VCP/p97 pore. Ubiquitin moieties on substrates may present a steric impediment to the threading process when the substrate is transferred to the VCP pore and threaded through VCP's axial channel. Mediates deubiquitination of 'Lys-27'-, 'Lys-29'- and 'Lys-33'-linked polyubiquitin chains. Also able to hydrolyze 'Lys-11'-linked ubiquitin chains. Cleaves both polyubiquitin and di-ubiquitin. May play a role in macroautophagy, regulating for instance the clearance of damaged lysosomes. May recruit PLAA, UBXN6 and VCP to damaged lysosome membranes decorated with K48-linked ubiquitin chains and remove these chains allowing autophagosome formation. The polypeptide is Ubiquitin thioesterase OTU1 (Yod1) (Mus musculus (Mouse)).